The following is a 510-amino-acid chain: Chromosomal replication initiator protein DnaA (510 aa).

Positions 1 to 74 are domain I, interacts with DnaA modulators; sequence MHTDLWERGC…EATLSELAGK (74 aa). The segment at 74–173 is domain II; it reads KPVRLELSLL…PTLSPAVSRG (100 aa). The interval 125–168 is disordered; that stretch reads ARHDPQSVVPTPGGSANGRAAPRVGEPGGPVGTSTLPVAPTLSP. Positions 174–390 are domain III, AAA+ region; it reads RLNPALTFDT…GALRKVLAYS (217 aa). ATP is bound by residues glycine 218, glycine 220, lysine 221, and threonine 222. A domain IV, binds dsDNA region spans residues 391–510; the sequence is RFSHKEISIN…LHVLEQTLKG (120 aa).

It belongs to the DnaA family. Oligomerizes as a right-handed, spiral filament on DNA at oriC.

It localises to the cytoplasm. Its function is as follows. Plays an essential role in the initiation and regulation of chromosomal replication. ATP-DnaA binds to the origin of replication (oriC) to initiate formation of the DNA replication initiation complex once per cell cycle. Binds the DnaA box (a 9 base pair repeat at the origin) and separates the double-stranded (ds)DNA. Forms a right-handed helical filament on oriC DNA; dsDNA binds to the exterior of the filament while single-stranded (ss)DNA is stabiized in the filament's interior. The ATP-DnaA-oriC complex binds and stabilizes one strand of the AT-rich DNA unwinding element (DUE), permitting loading of DNA polymerase. After initiation quickly degrades to an ADP-DnaA complex that is not apt for DNA replication. Binds acidic phospholipids. The chain is Chromosomal replication initiator protein DnaA from Leptothrix cholodnii (strain ATCC 51168 / LMG 8142 / SP-6) (Leptothrix discophora (strain SP-6)).